A 557-amino-acid polypeptide reads, in one-letter code: Potassium-transporting ATPase potassium-binding subunit (557 aa).

A run of 10 helical transmembrane segments spans residues 6–26, 59–79, 127–147, 172–192, 247–267, 278–298, 363–383, 410–430, 475–495, and 520–540; these read IQLL…GLGL, ALSL…ILFF, AGLT…LLAL, LYVL…FGVV, ISNF…VFLY, WAIF…VWTF, IVFG…LLTV, ILGI…SVSV, VMIA…VLVI, and FYIL…FPVL.

This sequence belongs to the KdpA family. The system is composed of three essential subunits: KdpA, KdpB and KdpC.

The protein resides in the cell inner membrane. Part of the high-affinity ATP-driven potassium transport (or Kdp) system, which catalyzes the hydrolysis of ATP coupled with the electrogenic transport of potassium into the cytoplasm. This subunit binds the periplasmic potassium ions and delivers the ions to the membrane domain of KdpB through an intramembrane tunnel. In Leptospira interrogans serogroup Icterohaemorrhagiae serovar copenhageni (strain Fiocruz L1-130), this protein is Potassium-transporting ATPase potassium-binding subunit.